The following is a 466-amino-acid chain: Coagulation factor IX (466 aa).

Positions 1 to 25 (MRCLNMIMAEPPGLITICLLGYLLG) are cleaved as a signal peptide. Residues 26–46 (ADCTVFLDHEDATKVLSRPKR) constitute a propeptide that is removed on maturation. Residues Tyr-47, Asn-48, Glu-53, Glu-54, Glu-61, Glu-63, Glu-66, Glu-67, Glu-72, Glu-73, and Glu-76 each coordinate Ca(2+). The 46-residue stretch at 47–92 (YNSGKLEEFVQGNLERECMEEKCSFEEAREVFENTEKTTEFWKQYV) folds into the Gla domain. A 4-carboxyglutamate mark is found at Glu-53, Glu-54, Glu-61, Glu-63, Glu-66, Glu-67, Glu-72, Glu-73, Glu-76, Glu-79, and Glu-82. Glu-61 contacts Mg(2+). An intrachain disulfide couples Cys-64 to Cys-69. Position 66 (Glu-66) interacts with Mg(2+). Glu-72 is a Mg(2+) binding site. Glu-76 provides a ligand contact to Mg(2+). Glu-82 serves as a coordination point for Ca(2+). Glu-82 contacts Mg(2+). Residue Thr-85 is glycosylated (O-linked (GalNAc...) threonine). Glu-86, Asp-93, Gly-94, and Gln-96 together coordinate Ca(2+). The residue at position 86 (Glu-86) is a 4-carboxyglutamate. Glu-86 contacts Mg(2+). The 37-residue stretch at 93 to 129 (DGDQCESNPCLNGGICKDDINSYECWCQTGFEGKNCE) folds into the EGF-like 1; calcium-binding domain. 10 disulfides stabilise this stretch: Cys-97/Cys-108, Cys-102/Cys-117, Cys-119/Cys-128, Cys-134/Cys-145, Cys-141/Cys-155, Cys-157/Cys-170, Cys-178/Cys-340, Cys-257/Cys-273, Cys-387/Cys-401, and Cys-412/Cys-440. The O-linked (Glc...) serine glycan is linked to Ser-99. 2 residues coordinate Ca(2+): Asp-110 and Asp-111. Asp-110 bears the (3R)-3-hydroxyaspartate mark. Ser-114 is subject to Phosphoserine. The 42-residue stretch at 130–171 (LDVTCNIKNGRCKQFCKLDADNKVVCSCTTGYQLAEDQKSCE) folds into the EGF-like 2 domain. Positions 193-231 (AETLFLNMDYENSTTDYENSAEAEKNVDNVTQPLNDLTR) are cleaved as a propeptide — activation peptide. At Tyr-202 the chain carries Sulfotyrosine. Residue Ser-205 is modified to Phosphoserine. Thr-206 carries the phosphothreonine; alternate modification. The O-linked (GalNAc...) threonine; alternate glycan is linked to Thr-206. The N-linked (GlcNAc...) asparagine glycan is linked to Asn-221. Residues Thr-223 and Thr-230 are each glycosylated (O-linked (GalNAc...) threonine). A Peptidase S1 domain is found at 232–464 (IVGGKTAKPG…YVNWIKEKTK (233 aa)). His-272 (charge relay system) is an active-site residue. Ca(2+) contacts are provided by Glu-286, Asn-288, Glu-291, Glu-293, and Glu-296. Asp-320 serves as the catalytic Charge relay system. Ser-416 (charge relay system) is an active-site residue.

The protein belongs to the peptidase S1 family. Heterodimer of a light chain and a heavy chain; disulfide-linked. Interacts (inactive and activated) with F11 (activated) in calcium-dependent manner. Interacts with SERPINC1. Post-translationally, the iron and 2-oxoglutarate dependent 3-hydroxylation of aspartate and asparagine is (R) stereospecific within EGF domains. In terms of processing, activated by factor XIa, which excises the activation peptide. The propeptide can also be removed by snake venom protease. Activated by coagulation factor VIIa-tissue factor (F7-F3) complex in calcium-dependent manner. Predominantly O-glucosylated at Ser-99 by POGLUT1 in vitro.

Its subcellular location is the secreted. It catalyses the reaction Selective cleavage of Arg-|-Ile bond in factor X to form factor Xa.. Factor IX is a vitamin K-dependent plasma protein that participates in the intrinsic pathway of blood coagulation by converting factor X to its active form in the presence of Ca(2+) ions, phospholipids, and factor VIIIa. The sequence is that of Coagulation factor IX (F9) from Felis catus (Cat).